The primary structure comprises 484 residues: FAD-dependent monooxygenase aurC (484 aa).

A signal peptide spans 1 to 21 (MGAYSFRVIIVGGSITGMTLA). Residues glutamate 35, glycine 49, and arginine 108 each coordinate FAD. Tyrosine 216 is an active-site residue. 2 residues coordinate FAD: aspartate 308 and glycine 321. The helical transmembrane segment at 451-471 (FAVASLIVLIVVLARALDSPA) threads the bilayer.

The protein belongs to the paxM FAD-dependent monooxygenase family. Requires FAD as cofactor.

Its subcellular location is the membrane. Its pathway is polyketide biosynthesis. Functionally, FAD-dependent monooxygenase; part of the gene cluster that mediates the biosynthesis of aurovertins, fungal polyketides that exhibit potent inhibition of adenosine triphosphate synthase. Tha biosynthesis starts with the HR-PKS aurA that selects propionate as the starter unit; synthesizes a hexa-ene chain through the repeated functions of the KR and DH domains in the first six iterations; selectively introduces three alpha-methyl substitutions at C4, C6, and C16 using the S-adensylmethionine-dependent cMET; and shuts off KR and DH in the last three iterations to afford a 1,3,5-triketo portion that can undergo intramolecular cyclization to yield the alpha-pyrone intermediate. AurE may act as a cyclase and enhances the rate of pyrone formation and product release of aurA. The methyltransferase aurB then methylates the C17 hydroxyl group. C17 methylation is required to initiate epoxidation by the downstream monooxygenase aurC. The monooxygenase aurC and the epoxide hydrolase aurD can iteratively transform the terminal triene portion of the methylated precursor into the dioxabicyclo[3.2.1]octane scaffold of aurovertin E. Epoxidation modifications of the precursor occur in two separate steps; bis-epoxidation of the two terminal olefins takes place first, followed by another epoxidation that occurs at C7-C8 after tetrahydrofuran formation. The O-acyltransferase aurG converts aurovertin E to aurovertin A. The polypeptide is FAD-dependent monooxygenase aurC (Calcarisporium arbuscula (Dendryphion arbuscula)).